We begin with the raw amino-acid sequence, 201 residues long: MQAKTFLLGAALAGVALAAHAEDGTIVITGTITDQTCTIEDPSPGYIKVVHLPTISKSALKNAGDVAGRTRFDIKLKDCPTTVNTLKLYFEPGPTTDYGTKDLKAYKQAWYVDAATLLKSPPSVTEAKGVQIRLMNLNGKQIPMGETEPNQHAAAFSGTMQAGQAKKSFTLHYLAGYVKKASGEVEATMLTTYVGFSVVYP.

An N-terminal signal peptide occupies residues 1–21 (MQAKTFLLGAALAGVALAAHA). C37 and C79 are disulfide-bonded.

It belongs to the fimbrial protein family.

The protein localises to the fimbrium. Functionally, bordetella pertussis is the causative agent of whooping cough. An essential step in the disease process is the attachment of the bacteria to the ciliated epithelium of the respiratory tract, enabling the organism to resist normal host-clearance mechanisms. It is unclear which bacterial cell surface component are responsible for adherence but the fimbriae of B.pertussis are prime candidates for being involved in this process. The polypeptide is Fimbrial protein FimX (fimX) (Bordetella pertussis (strain Tohama I / ATCC BAA-589 / NCTC 13251)).